A 211-amino-acid chain; its full sequence is Ribosomal RNA large subunit methyltransferase E (211 aa).

Residues Gly-60, Trp-62, Asp-85, Asp-101, and Asp-126 each coordinate S-adenosyl-L-methionine. Lys-166 functions as the Proton acceptor in the catalytic mechanism.

It belongs to the class I-like SAM-binding methyltransferase superfamily. RNA methyltransferase RlmE family.

It localises to the cytoplasm. The catalysed reaction is uridine(2552) in 23S rRNA + S-adenosyl-L-methionine = 2'-O-methyluridine(2552) in 23S rRNA + S-adenosyl-L-homocysteine + H(+). Its function is as follows. Specifically methylates the uridine in position 2552 of 23S rRNA at the 2'-O position of the ribose in the fully assembled 50S ribosomal subunit. The chain is Ribosomal RNA large subunit methyltransferase E from Bordetella petrii (strain ATCC BAA-461 / DSM 12804 / CCUG 43448).